Here is a 633-residue protein sequence, read N- to C-terminus: Glutathione S-transferase C-terminal domain-containing protein (633 aa).

The GST C-terminal domain maps to 130–332 (LGFKKTCLKA…QEVPGVKTAA (203 aa)). The segment at 191-233 (NDDKLRRQKLKQQKADGVGPPLTKGKAKSKVHTQETSEGLDSS) is disordered. Polar residues predominate over residues 224–233 (QETSEGLDSS). Ser-233 carries the post-translational modification Phosphoserine.

The protein belongs to the GSTCD family. As to expression, widely expressed in cell types relevant to airway function, including airway smooth muscle cells and epithelial cells.

The protein localises to the cytoplasm. The chain is Glutathione S-transferase C-terminal domain-containing protein (GSTCD) from Homo sapiens (Human).